The chain runs to 344 residues: N-acetyl-gamma-glutamyl-phosphate reductase (344 aa).

The active site involves Cys150.

Belongs to the NAGSA dehydrogenase family. Type 1 subfamily.

The protein localises to the cytoplasm. It catalyses the reaction N-acetyl-L-glutamate 5-semialdehyde + phosphate + NADP(+) = N-acetyl-L-glutamyl 5-phosphate + NADPH + H(+). It participates in amino-acid biosynthesis; L-arginine biosynthesis; N(2)-acetyl-L-ornithine from L-glutamate: step 3/4. In terms of biological role, catalyzes the NADPH-dependent reduction of N-acetyl-5-glutamyl phosphate to yield N-acetyl-L-glutamate 5-semialdehyde. The chain is N-acetyl-gamma-glutamyl-phosphate reductase from Pseudomonas syringae pv. syringae (strain B728a).